Consider the following 511-residue polypeptide: Potassium voltage-gated channel subfamily A member 10 (511 aa).

The tract at residues 22–50 (IQEEPGYATDFDSTSPKGRPGGSSFSNGK) is disordered. Residues 218–238 (VAVVSVLVVVISITIFCLETL) form a helical membrane-spanning segment. Residue Asn-256 is glycosylated (N-linked (GlcNAc...) asparagine). Residues 271–292 (FFMVESTCIVWFTFELVLRFVV) traverse the membrane as a helical segment. Residue Cys-293 is the site of S-palmitoyl cysteine attachment. The chain crosses the membrane as a helical span at residues 303 to 323 (IMNIIDIISIIPYFATLITEL). An N-linked (GlcNAc...) asparagine glycan is attached at Asn-334. A helical; Voltage-sensor transmembrane segment spans residues 339–358 (ILRIIRLVRVFRIFKLSRHS). Residues 375 to 395 (LGLLIFFLFIGVILFSSAVYF) traverse the membrane as a helical segment. The Selectivity filter signature appears at 421 to 426 (TVGYGD). Residues 436–456 (IVGTLCAIAGVLTIALPVPVI) traverse the membrane as a helical segment. The tract at residues 489-511 (SRMGSTDSLNKTNGGCSTEKSRK) is disordered. Asn-498 carries an N-linked (GlcNAc...) asparagine glycan.

This sequence belongs to the potassium channel family. A (Shaker) (TC 1.A.1.2) subfamily. Kv1.8/KCNA10 sub-subfamily. Homotetramer. Interacts with KCN4B/POMP. Interaction with KCN4B/POMP is necessary for the modulation of channel activity by cAMP. In terms of tissue distribution, detected in kidney, in proximal tubules, glomerular endothelium, in vascular endothelium and in smooth muscle cells.

The protein localises to the membrane. The catalysed reaction is K(+)(in) = K(+)(out). With respect to regulation, the channel activity is up-regulated by cAMP. In terms of biological role, voltage-gated potassium ion channel that mediates K(+) permeability of excitable membranes. When opened in response to the voltage difference across the membrane, KCNA10 channel selectively allows the flow of potassium ions across the membrane down their electrochemical gradient. The protein is Potassium voltage-gated channel subfamily A member 10 of Homo sapiens (Human).